A 349-amino-acid chain; its full sequence is Acyl-CoA Delta(11) desaturase (349 aa).

A run of 2 helical transmembrane segments spans residues 41 to 61 and 66 to 86; these read FLTFSYAHLAALYGLYLCFTS and TLLFSFVLFHMSNIGITAGAH. The short motif at 86 to 91 is the Histidine box-1 element; that stretch reads HRLWTH. Residues 123–127 carry the Histidine box-2 motif; the sequence is HRLHH. Residues 184 to 204 traverse the membrane as a helical segment; it reads AVPLIGTVCFALPTLIPVYCW. The short motif at 263–267 is the Histidine box-3 element; the sequence is HNYHH. A helical membrane pass occupies residues 282-302; that stretch reads FLNLTTLFIDFCAWFGWAYDL.

It belongs to the fatty acid desaturase type 1 family. Fe cation is required as a cofactor. In terms of tissue distribution, adult female pheromone gland. Increases by two or three orders of magnitude during the first 2 days after adult eclosion.

The protein resides in the endoplasmic reticulum membrane. The catalysed reaction is an 11,12-saturated fatty acyl-CoA + 2 Fe(II)-[cytochrome b5] + O2 + 2 H(+) = an (11Z)-Delta(11)-fatty acyl-CoA + 2 Fe(III)-[cytochrome b5] + 2 H2O. In terms of biological role, catalyzes the formation of Delta(11) fatty acyl precursors in the pheromone gland. The polypeptide is Acyl-CoA Delta(11) desaturase (D11DS) (Trichoplusia ni (Cabbage looper)).